The following is a 367-amino-acid chain: Glutamate 5-kinase (367 aa).

ATP is bound at residue lysine 9. 3 residues coordinate substrate: serine 49, aspartate 136, and asparagine 148. Residues 168 to 169 (TD) and 210 to 216 (TGGMKSK) each bind ATP. The PUA domain occupies 276–350 (SGQIEIDAGA…GMQSQHIQAR (75 aa)).

It belongs to the glutamate 5-kinase family.

Its subcellular location is the cytoplasm. It carries out the reaction L-glutamate + ATP = L-glutamyl 5-phosphate + ADP. Its pathway is amino-acid biosynthesis; L-proline biosynthesis; L-glutamate 5-semialdehyde from L-glutamate: step 1/2. Its function is as follows. Catalyzes the transfer of a phosphate group to glutamate to form L-glutamate 5-phosphate. The chain is Glutamate 5-kinase from Bacillus cereus (strain ATCC 10987 / NRS 248).